The sequence spans 375 residues: 23S rRNA (uracil(747)-C(5))-methyltransferase RlmC (375 aa).

C3, C11, C14, and C87 together coordinate [4Fe-4S] cluster. 4 residues coordinate S-adenosyl-L-methionine: Q212, F241, E262, and N307. The active-site Nucleophile is C334.

It belongs to the class I-like SAM-binding methyltransferase superfamily. RNA M5U methyltransferase family. RlmC subfamily.

The catalysed reaction is uridine(747) in 23S rRNA + S-adenosyl-L-methionine = 5-methyluridine(747) in 23S rRNA + S-adenosyl-L-homocysteine + H(+). Its function is as follows. Catalyzes the formation of 5-methyl-uridine at position 747 (m5U747) in 23S rRNA. The polypeptide is 23S rRNA (uracil(747)-C(5))-methyltransferase RlmC (Escherichia coli O157:H7).